The primary structure comprises 660 residues: Arginine--tRNA ligase, cytoplasmic (660 aa).

Residue Met1 is modified to N-acetylmethionine. Residues 1 to 72 (MDGLVAQCSA…QAERKRPTKN (72 aa)) are could be involved in the assembly of the multisynthetase complex. Residues 200 to 202 (SPN), His211, Tyr384, Asp388, and Gln412 contribute to the L-arginine site. The 'HIGH' region motif lies at 201–212 (PNIAKEMHVGHL). Residues 529-543 (NTAAYLLYAFTRIRS) are interaction with tRNA.

The protein belongs to the class-I aminoacyl-tRNA synthetase family. In terms of assembly, interacts (via N-terminus) with AIMP1 (via N-terminus); this stimulates its catalytic activity. Interacts (via N-terminus) with LARS2 (via C-terminus). Monomer. Part of a multisubunit complex that groups tRNA ligases for Arg (RARS1), Asp (DARS1), Gln (QARS1), Ile (IARS1), Leu (LARS1), Lys (KARS1), Met (MARS1) the bifunctional ligase for Glu and Pro (EPRS1) and the auxiliary subunits AIMP1/p43, AIMP2/p38 and EEF1E1/p18. Interacts with QARS1. Part of a complex composed of RARS1, QARS1 and AIMP1. Detected in dorsal root ganglion.

It localises to the cytoplasm. The protein resides in the cytosol. The catalysed reaction is tRNA(Arg) + L-arginine + ATP = L-arginyl-tRNA(Arg) + AMP + diphosphate. Its function is as follows. Forms part of a macromolecular complex that catalyzes the attachment of specific amino acids to cognate tRNAs during protein synthesis. Modulates the secretion of AIMP1 and may be involved in generation of the inflammatory cytokine EMAP2 from AIMP1. In Rattus norvegicus (Rat), this protein is Arginine--tRNA ligase, cytoplasmic (Rars1).